The chain runs to 976 residues: Leucine--tRNA ligase (976 aa).

Over residues 1-23 the composition is skewed to low complexity; sequence MTESPTTTPGSTSGAPSGVPSGV. The segment at 1–34 is disordered; the sequence is MTESPTTTPGSTSGAPSGVPSGVNDAESDAPRHR. Positions 86-97 match the 'HIGH' region motif; the sequence is PYPSGEGLHVGH. The 'KMSKS' region motif lies at 745 to 749; sequence KIGKS. Lys748 is a binding site for ATP.

This sequence belongs to the class-I aminoacyl-tRNA synthetase family.

It is found in the cytoplasm. The catalysed reaction is tRNA(Leu) + L-leucine + ATP = L-leucyl-tRNA(Leu) + AMP + diphosphate. The sequence is that of Leucine--tRNA ligase from Mycobacterium marinum (strain ATCC BAA-535 / M).